The sequence spans 375 residues: MDATLPSIHTALKILGPNNVSVSENTALPVIQPLDILVRVACISINHVDAKSADMSPSPGATSGTDFSGVVVAIGSDVPKESFRSTNGMKPVQIGDRVFGGVFGNNPLRRDNGAFAEYVAVPARLVWHIPGGMDFSTASTLGAAVATVGLSLFQYMQLPMPTTTSTASPDNGPFVLVYGGGTATGAMAIQVLKIAGFRPITTCSSASAGHATELGATATFDYRSPTCGAELREHTGDTLTLALDCITDTASMNICYEALGSSGGRYVALDSFPLRAHTRRSVVPDWVCTYSQFGHPIAWAAPYNLEARPEDLLTAEAWYVVAQKLIDQGLITPHPKEERLGGLAAIGEGMEAVRRGQIKGKKLVYPISNELCAAA.

Position 48–51 (48–51) interacts with NADP(+); that stretch reads VDAK. Position 143–150 (143–150) interacts with substrate; sequence AAVATVGL. NADP(+) contacts are provided by residues 204-207, tyrosine 222, and 269-270; these read SSAS and LD. Residue 289–293 coordinates substrate; it reads TYSQF. NADP(+) is bound at residue 358-359; it reads IK.

This sequence belongs to the zinc-containing alcohol dehydrogenase family. In terms of assembly, monomer.

The catalysed reaction is N-[(4E,6E,10S,12Z,14E)-6,10-dimethyl-3-oxohexadeca-4,6,12,14-tetraenoyl]-L-tyrosyl-[ACP] = (3E,5S)-3-[(2E,4E,8S,10E,12Z)-1-hydroxy-4,8-dimethyltetradeca-2,4,10,12-tetraen-1-ylidene]-5-[(4-hydroxyphenyl)methyl]pyrrolidine-2,4-dione + holo-[ACP] + H(+). The protein operates within mycotoxin biosynthesis. In terms of biological role, trans-enoyl reductase; part of the gene cluster that mediates the biosynthesis of ilicicolin H, a 4-hydroxy-2-pyridonealkaloid that has potent and broad antifungal activities by inhibiting the mitochondrial respiration chain. IccB collaborates with the hybrid PKS-NRPS synthetase iccA to assemble the backbone of ilicicolin H. The PKS portion of iccA and trans-acting enoyl reductase iccB work together to construct an octaketide, and two methyl groups are introduced by the MT domain of iccA during the chain assembly. The nascent chain is then condensed with tyrosine, catalyzed by the iliA C domain, and the resulting PKS-NRPS hybrid is offloaded by the iliA RED domain to form an advanced tetramic acid intermediate. The biosynthesis of ilicicolin H starts with formation of the tetramic acid by the hybrid PKS-NRPS synthetase iccA with the partnering trans-enoyl reductase iccB since iccA lacks a designated enoylreductase (ER) domain. The cytochrome P450 monooxygenase iccC then catalyzes the ring expansion of the tetramate to the acyclic 2-pyridone. The pericyclase iccD further converts the acyclic 2-pyridone into 8-epi-ilicicolin H. Finally, the epimerase iccE converts 8-epi-ilicicolin H into ilicicolin H via epimerization. IccA to iccE are sufficient for ilicicolin H biosynthesis and the roles of the remaining enzymes, iccF, iccG and iccH within the pathway have still to be determined. The protein is Trans-enoyl reductase iccB of Talaromyces variabilis (Penicillium variabile).